The chain runs to 29 residues: Neurotoxin BmK A3-6 (29 aa).

Post-translationally, contains 3 disulfide bonds. As to expression, expressed by the venom gland.

It is found in the secreted. The chain is Neurotoxin BmK A3-6 from Olivierus martensii (Manchurian scorpion).